A 361-amino-acid chain; its full sequence is Chorismate synthase (361 aa).

NADP(+) contacts are provided by arginine 48 and arginine 54. Residues 125–127 (RSS), 238–239 (NA), glycine 278, 293–297 (KPTSS), and arginine 319 contribute to the FMN site.

This sequence belongs to the chorismate synthase family. As to quaternary structure, homotetramer. FMNH2 serves as cofactor.

It carries out the reaction 5-O-(1-carboxyvinyl)-3-phosphoshikimate = chorismate + phosphate. Its pathway is metabolic intermediate biosynthesis; chorismate biosynthesis; chorismate from D-erythrose 4-phosphate and phosphoenolpyruvate: step 7/7. In terms of biological role, catalyzes the anti-1,4-elimination of the C-3 phosphate and the C-6 proR hydrogen from 5-enolpyruvylshikimate-3-phosphate (EPSP) to yield chorismate, which is the branch point compound that serves as the starting substrate for the three terminal pathways of aromatic amino acid biosynthesis. This reaction introduces a second double bond into the aromatic ring system. This Enterobacter sp. (strain 638) protein is Chorismate synthase.